The primary structure comprises 458 residues: Argininosuccinate lyase (458 aa).

It belongs to the lyase 1 family. Argininosuccinate lyase subfamily.

It is found in the cytoplasm. It catalyses the reaction 2-(N(omega)-L-arginino)succinate = fumarate + L-arginine. Its pathway is amino-acid biosynthesis; L-arginine biosynthesis; L-arginine from L-ornithine and carbamoyl phosphate: step 3/3. The protein is Argininosuccinate lyase of Salmonella paratyphi B (strain ATCC BAA-1250 / SPB7).